Here is a 396-residue protein sequence, read N- to C-terminus: L-lactate dehydrogenase (396 aa).

Residues methionine 1–glycine 380 enclose the FMN hydroxy acid dehydrogenase domain. Tyrosine 24 contributes to the substrate binding site. The FMN site is built by serine 106 and glutamine 127. Substrate is bound at residue tyrosine 129. Threonine 155 is an FMN binding site. A substrate-binding site is contributed by arginine 164. Residue lysine 251 coordinates FMN. The Proton acceptor role is filled by histidine 275. Arginine 278 contacts substrate. Aspartate 306–arginine 330 contributes to the FMN binding site.

This sequence belongs to the FMN-dependent alpha-hydroxy acid dehydrogenase family. The cofactor is FMN.

Its subcellular location is the cell inner membrane. It carries out the reaction (S)-lactate + A = pyruvate + AH2. In terms of biological role, catalyzes the conversion of L-lactate to pyruvate. Is coupled to the respiratory chain. The polypeptide is L-lactate dehydrogenase (Salmonella arizonae (strain ATCC BAA-731 / CDC346-86 / RSK2980)).